Here is a 207-residue protein sequence, read N- to C-terminus: Histidine biosynthesis bifunctional protein HisIE (207 aa).

A phosphoribosyl-AMP cyclohydrolase region spans residues 1 to 117 (MSLVTTINWE…GKQEQPALVF (117 aa)). The interval 118–207 (LHQLEQVLAN…TEKLQERHNK (90 aa)) is phosphoribosyl-ATP pyrophosphohydrolase.

In the N-terminal section; belongs to the PRA-CH family. It in the C-terminal section; belongs to the PRA-PH family.

It localises to the cytoplasm. It carries out the reaction 1-(5-phospho-beta-D-ribosyl)-ATP + H2O = 1-(5-phospho-beta-D-ribosyl)-5'-AMP + diphosphate + H(+). It catalyses the reaction 1-(5-phospho-beta-D-ribosyl)-5'-AMP + H2O = 1-(5-phospho-beta-D-ribosyl)-5-[(5-phospho-beta-D-ribosylamino)methylideneamino]imidazole-4-carboxamide. It functions in the pathway amino-acid biosynthesis; L-histidine biosynthesis; L-histidine from 5-phospho-alpha-D-ribose 1-diphosphate: step 2/9. The protein operates within amino-acid biosynthesis; L-histidine biosynthesis; L-histidine from 5-phospho-alpha-D-ribose 1-diphosphate: step 3/9. In Photobacterium profundum (strain SS9), this protein is Histidine biosynthesis bifunctional protein HisIE.